The chain runs to 157 residues: 2-C-methyl-D-erythritol 2,4-cyclodiphosphate synthase (157 aa).

A divalent metal cation-binding residues include D9 and H11. 4-CDP-2-C-methyl-D-erythritol 2-phosphate-binding positions include 9-11 (DVH) and 35-36 (HS). Position 43 (H43) interacts with a divalent metal cation. 4-CDP-2-C-methyl-D-erythritol 2-phosphate-binding positions include 57–59 (DIG), 62–66 (FPDTD), 101–107 (AEKPKMA), 133–136 (TTTE), F140, and R143.

Belongs to the IspF family. Homotrimer. It depends on a divalent metal cation as a cofactor.

It catalyses the reaction 4-CDP-2-C-methyl-D-erythritol 2-phosphate = 2-C-methyl-D-erythritol 2,4-cyclic diphosphate + CMP. The protein operates within isoprenoid biosynthesis; isopentenyl diphosphate biosynthesis via DXP pathway; isopentenyl diphosphate from 1-deoxy-D-xylulose 5-phosphate: step 4/6. Functionally, involved in the biosynthesis of isopentenyl diphosphate (IPP) and dimethylallyl diphosphate (DMAPP), two major building blocks of isoprenoid compounds. Catalyzes the conversion of 4-diphosphocytidyl-2-C-methyl-D-erythritol 2-phosphate (CDP-ME2P) to 2-C-methyl-D-erythritol 2,4-cyclodiphosphate (ME-CPP) with a corresponding release of cytidine 5-monophosphate (CMP). This is 2-C-methyl-D-erythritol 2,4-cyclodiphosphate synthase from Listeria monocytogenes serotype 4a (strain HCC23).